Reading from the N-terminus, the 302-residue chain is Sulfate adenylyltransferase subunit 2 (302 aa).

The interval 280–302 is disordered; it reads RQGRAIDHDQSGSMELKKRQGYF.

Belongs to the PAPS reductase family. CysD subfamily. In terms of assembly, heterodimer composed of CysD, the smaller subunit, and CysN.

It catalyses the reaction sulfate + ATP + H(+) = adenosine 5'-phosphosulfate + diphosphate. It functions in the pathway sulfur metabolism; hydrogen sulfide biosynthesis; sulfite from sulfate: step 1/3. In terms of biological role, with CysN forms the ATP sulfurylase (ATPS) that catalyzes the adenylation of sulfate producing adenosine 5'-phosphosulfate (APS) and diphosphate, the first enzymatic step in sulfur assimilation pathway. APS synthesis involves the formation of a high-energy phosphoric-sulfuric acid anhydride bond driven by GTP hydrolysis by CysN coupled to ATP hydrolysis by CysD. The sequence is that of Sulfate adenylyltransferase subunit 2 from Vibrio vulnificus (strain CMCP6).